A 328-amino-acid chain; its full sequence is Cytochrome c biogenesis protein CcsA (328 aa).

A run of 8 helical transmembrane segments spans residues 13 to 33 (ISFS…LVNL), 46 to 66 (GIII…IFSG), 73 to 93 (LYES…ISFF), 101 to 121 (LNAI…SGLL), 146 to 166 (MVLG…LLVI), 234 to 254 (IISL…VWAN), 263 to 283 (WDPK…YLHI), and 295 to 315 (AIVA…VNLL).

Belongs to the CcmF/CycK/Ccl1/NrfE/CcsA family. May interact with Ccs1.

It localises to the plastid. The protein localises to the chloroplast thylakoid membrane. Functionally, required during biogenesis of c-type cytochromes (cytochrome c6 and cytochrome f) at the step of heme attachment. The polypeptide is Cytochrome c biogenesis protein CcsA (Aethionema grandiflorum (Persian stone-cress)).